Here is a 516-residue protein sequence, read N- to C-terminus: MSATLRFDNIGKVFPGVRALDGVSFDVNVGQVHGLMGENGAGKSTLLKILGGEYQPDSGRVMIDGNEVRFTSAASSIAAGIAVIHQELQYVPDLTVAENLLLGQLPNSLGWVNKREAKRFVRERLEAMGVALDPNAKLRKLSIAQRQMVEICKALLRNARVIALDEPTSSLSHRETEVLFKLVRDLRADNRAMIYISHRMDEIYELCDACTIFRDGRKIASHPTLEGVSRDTIVSEMVGREISDIYNYSARPLGEVRFAAKAIEGHALAQPASFEVRRGEIVGFFGLVGAGRSELMHLVYGADRKKGGELTLDGKPIKVRSAGEAIRHGIVLCPEDRKEEGIVAMASVSENINISCRRHYLRAGMFLDRKKEAETADRFIKLLKIKTPSRRQKIRFLSGGNQQKAILSRWLAEPDLKVVILDEPTRGIDVGAKHEIYNVIYQLAERGCAIVMISSELPEVLGVSDRIVVMRQGRISGELARQDATEQSVLSLALPQSSTALPGTDAGTETAAQQAA.

ABC transporter domains lie at 5–240 and 240–497; these read LRFD…MVGR and REIS…LPQS. 37 to 44 serves as a coordination point for ATP; it reads GENGAGKS.

The protein belongs to the ABC transporter superfamily. Arabinose importer (TC 3.A.1.2.2) family. In terms of assembly, the complex is composed of two ATP-binding proteins (AraG), two transmembrane proteins (AraH) and a solute-binding protein (AraF).

The protein resides in the cell inner membrane. The enzyme catalyses L-arabinose(out) + ATP + H2O = L-arabinose(in) + ADP + phosphate + H(+). In terms of biological role, part of the ABC transporter complex AraFGH involved in arabinose import. Responsible for energy coupling to the transport system. This is Arabinose import ATP-binding protein AraG from Paraburkholderia xenovorans (strain LB400).